A 183-amino-acid polypeptide reads, in one-letter code: Translation initiation factor IF-3 (183 aa).

This sequence belongs to the IF-3 family. Monomer.

Its subcellular location is the cytoplasm. In terms of biological role, IF-3 binds to the 30S ribosomal subunit and shifts the equilibrium between 70S ribosomes and their 50S and 30S subunits in favor of the free subunits, thus enhancing the availability of 30S subunits on which protein synthesis initiation begins. This chain is Translation initiation factor IF-3, found in Yersinia enterocolitica serotype O:8 / biotype 1B (strain NCTC 13174 / 8081).